The primary structure comprises 378 residues: Sterol 24-C-methyltransferase erg6 (378 aa).

The protein belongs to the class I-like SAM-binding methyltransferase superfamily. Erg6/SMT family.

The protein resides in the nucleus. It localises to the endoplasmic reticulum. The catalysed reaction is zymosterol + S-adenosyl-L-methionine = fecosterol + S-adenosyl-L-homocysteine + H(+). The enzyme catalyses lanosterol + S-adenosyl-L-methionine = eburicol + S-adenosyl-L-homocysteine + H(+). Its pathway is steroid metabolism; ergosterol biosynthesis. Sterol 24-C-methyltransferase; part of the third module of ergosterol biosynthesis pathway that includes by the late steps of the pathway. Erg6 catalyzes the methyl transfer from S-adenosyl-methionine to the C-24 of zymosterol to form fecosterol. The third module or late pathway involves the ergosterol synthesis itself through consecutive reactions that mainly occur in the endoplasmic reticulum (ER) membrane. Firstly, the squalene synthase erg9 catalyzes the condensation of 2 farnesyl pyrophosphate moieties to form squalene, which is the precursor of all steroids. Secondly, squalene is converted into lanosterol by the consecutive action of the squalene epoxidase erg1 and the lanosterol synthase erg7. The lanosterol 14-alpha-demethylase erg11/cyp1 catalyzes C14-demethylation of lanosterol to produce 4,4'-dimethyl cholesta-8,14,24-triene-3-beta-ol. In the next steps, a complex process involving various demethylation, reduction and desaturation reactions catalyzed by the C-14 reductase erg24 and the C-4 demethylation complex erg25-erg26-erg27 leads to the production of zymosterol. Erg28 likely functions in the C-4 demethylation complex reaction by tethering erg26 and Erg27 to the endoplasmic reticulum or to facilitate interaction between these proteins. Then, the sterol 24-C-methyltransferase erg6 catalyzes the methyl transfer from S-adenosyl-methionine to the C-24 of zymosterol to form fecosterol. The C-8 sterol isomerase erg2 catalyzes the reaction which results in unsaturation at C-7 in the B ring of sterols and thus converts fecosterol to episterol. The sterol-C5-desaturases erg31 and erg32 then catalyze the introduction of a C-5 double bond in the B ring to produce 5-dehydroepisterol. The C-22 sterol desaturase erg5 further converts 5-dehydroepisterol into ergosta-5,7,22,24(28)-tetraen-3beta-ol by forming the C-22(23) double bond in the sterol side chain. Finally, ergosta-5,7,22,24(28)-tetraen-3beta-ol is substrate of the C-24(28) sterol reductase erg4 to produce ergosterol. In the genus Schizosaccharomyces, a second route exists between lanosterol and fecosterol, via the methylation of lanosterol to eburicol by erg6, followed by C14-demethylation by erg11/cyp1 and C4-demethylation by the demethylation complex erg25-erg26-erg27. This Schizosaccharomyces pombe (strain 972 / ATCC 24843) (Fission yeast) protein is Sterol 24-C-methyltransferase erg6.